A 409-amino-acid polypeptide reads, in one-letter code: Argininosuccinate synthase (409 aa).

ATP is bound by residues 12-20 (AYSGGLDTS) and A39. Y90 and S95 together coordinate L-citrulline. Residue G120 coordinates ATP. L-aspartate-binding residues include T122, N126, and D127. N126 provides a ligand contact to L-citrulline. L-citrulline is bound by residues R130, S181, S190, E266, and Y278.

This sequence belongs to the argininosuccinate synthase family. Type 1 subfamily. As to quaternary structure, homotetramer.

The protein localises to the cytoplasm. The catalysed reaction is L-citrulline + L-aspartate + ATP = 2-(N(omega)-L-arginino)succinate + AMP + diphosphate + H(+). It functions in the pathway amino-acid biosynthesis; L-arginine biosynthesis; L-arginine from L-ornithine and carbamoyl phosphate: step 2/3. This is Argininosuccinate synthase from Gluconacetobacter diazotrophicus (strain ATCC 49037 / DSM 5601 / CCUG 37298 / CIP 103539 / LMG 7603 / PAl5).